Consider the following 95-residue polypeptide: Small ribosomal subunit protein uS19 (95 aa).

It belongs to the universal ribosomal protein uS19 family.

In terms of biological role, protein S19 forms a complex with S13 that binds strongly to the 16S ribosomal RNA. The sequence is that of Small ribosomal subunit protein uS19 from Chloroflexus aggregans (strain MD-66 / DSM 9485).